Consider the following 325-residue polypeptide: HTH-type transcriptional regulator VqsM (325 aa).

An HTH araC/xylS-type domain is found at 226–323; sequence QRIELFLDSI…GQSTTEFRNS (98 aa). 2 consecutive DNA-binding regions (H-T-H motif) follow at residues 243 to 264 and 290 to 313; these read VTTA…ADEG and VDRI…RRWT.

Functionally, transcriptional regulator involved in both the repression (at least 99 genes, such as mexR and algU) and in the activation (at least 203 genes, such as mvfR, rsaL, vqsR and rpoS) of regulatory or putative regulatory proteins which are implicated in quorum sensing, virulence and multidrug resistance. In Pseudomonas aeruginosa (strain ATCC 15692 / DSM 22644 / CIP 104116 / JCM 14847 / LMG 12228 / 1C / PRS 101 / PAO1), this protein is HTH-type transcriptional regulator VqsM (vqsM).